We begin with the raw amino-acid sequence, 473 residues long: Photosystem II CP43 reaction center protein (473 aa).

Residues 1-14 (MKILYSLRRFYHVE) constitute a propeptide that is removed on maturation. Threonine 15 bears the N-acetylthreonine mark. The residue at position 15 (threonine 15) is a Phosphothreonine. Transmembrane regions (helical) follow at residues 69-93 (LFEVAHFVPEKPMYEQGLILLPHLA), 134-155 (LLGPETLEESFPFFGYVWKDRN), 178-200 (KALYFGGVYDTWAPGGGDVRKIT), 255-275 (KPFAWARRAFVWSGEAYLSYS), and 291-312 (WFNNTAYPSEFYGPTGPEASQA). Position 367 (glutamate 367) interacts with [CaMn4O5] cluster. The helical transmembrane segment at 447–471 (RARAAAAGFEKGIDRDLEPVLYMNP) threads the bilayer.

This sequence belongs to the PsbB/PsbC family. PsbC subfamily. PSII is composed of 1 copy each of membrane proteins PsbA, PsbB, PsbC, PsbD, PsbE, PsbF, PsbH, PsbI, PsbJ, PsbK, PsbL, PsbM, PsbT, PsbX, PsbY, PsbZ, Psb30/Ycf12, at least 3 peripheral proteins of the oxygen-evolving complex and a large number of cofactors. It forms dimeric complexes. Binds multiple chlorophylls and provides some of the ligands for the Ca-4Mn-5O cluster of the oxygen-evolving complex. It may also provide a ligand for a Cl- that is required for oxygen evolution. PSII binds additional chlorophylls, carotenoids and specific lipids. serves as cofactor.

Its subcellular location is the plastid. The protein resides in the chloroplast thylakoid membrane. One of the components of the core complex of photosystem II (PSII). It binds chlorophyll and helps catalyze the primary light-induced photochemical processes of PSII. PSII is a light-driven water:plastoquinone oxidoreductase, using light energy to abstract electrons from H(2)O, generating O(2) and a proton gradient subsequently used for ATP formation. The chain is Photosystem II CP43 reaction center protein from Lolium perenne (Perennial ryegrass).